The sequence spans 1435 residues: Sterol 3-beta-glucosyltransferase (1435 aa).

4 disordered regions span residues 1–26 (MAPD…HQVA), 75–107 (SDEE…KFEG), 123–169 (RFSS…KDTP), and 185–206 (PSFE…RTSP). The span at 85–99 (TRQSSESHINRSSID) shows a compositional bias: polar residues. Over residues 123–133 (RFSSRSKSKSS) the composition is skewed to low complexity. Positions 134–143 (NTIARGSRTP) are enriched in polar residues. Positions 189–206 (MPRKSKDPAEVDDERTSP) are enriched in basic and acidic residues. The region spanning 211-258 (ERLMEIFKFETPEDVLEEYPCWLMKSVLLQGYMYITTKHICFYAYLPK) is the GRAM 1 domain. Positions 262-360 (EVVKSGYLSK…WVKALQKIIF (99 aa)) constitute a PH domain. 4 disordered regions span residues 444–477 (LSTA…PNAP), 527–594 (DLNR…QASA), 610–671 (QHSP…QAEI), and 727–759 (GKKH…ATPA). Over residues 527–537 (DLNRLTTEHHR) the composition is skewed to basic and acidic residues. Polar residues-rich tracts occupy residues 539–554 (NSAN…STNR), 628–647 (KSRS…TRTQ), and 657–671 (TTGS…QAEI). The span at 729-742 (KHYEEPHGIPRDNE) shows a compositional bias: basic and acidic residues. One can recognise a GRAM 2 domain in the interval 760–826 (DRFRDHFALP…KDIENVDKEK (67 aa)). Positions 949, 950, 952, 1252, 1254, 1267, 1271, 1272, 1291, and 1292 each coordinate UDP-alpha-D-glucose.

The protein belongs to the glycosyltransferase 28 family.

The protein localises to the cytoplasm. The protein resides in the preautophagosomal structure membrane. The enzyme catalyses a sterol + UDP-alpha-D-glucose = a sterol 3-beta-D-glucoside + UDP + H(+). It catalyses the reaction ergosterol + UDP-alpha-D-glucose = ergosteryl 3-beta-D-glucoside + UDP + H(+). Its function is as follows. Sterol glycosyltransferase responsible for the glycosylation of ergosterol to form ergosterol-glucoside. The polypeptide is Sterol 3-beta-glucosyltransferase (Sclerotinia sclerotiorum (strain ATCC 18683 / 1980 / Ss-1) (White mold)).